Reading from the N-terminus, the 482-residue chain is Proline--tRNA ligase (482 aa).

This sequence belongs to the class-II aminoacyl-tRNA synthetase family. ProS type 3 subfamily. Homodimer.

The protein localises to the cytoplasm. The catalysed reaction is tRNA(Pro) + L-proline + ATP = L-prolyl-tRNA(Pro) + AMP + diphosphate. Its function is as follows. Catalyzes the attachment of proline to tRNA(Pro) in a two-step reaction: proline is first activated by ATP to form Pro-AMP and then transferred to the acceptor end of tRNA(Pro). The polypeptide is Proline--tRNA ligase (Mycoplasmopsis synoviae (strain 53) (Mycoplasma synoviae)).